A 316-amino-acid chain; its full sequence is Ribosomal RNA small subunit methyltransferase H (316 aa).

S-adenosyl-L-methionine is bound by residues 35–37, Asp55, Phe84, Asp105, and Gln112; that span reads AGH.

This sequence belongs to the methyltransferase superfamily. RsmH family.

The protein localises to the cytoplasm. It carries out the reaction cytidine(1402) in 16S rRNA + S-adenosyl-L-methionine = N(4)-methylcytidine(1402) in 16S rRNA + S-adenosyl-L-homocysteine + H(+). Its function is as follows. Specifically methylates the N4 position of cytidine in position 1402 (C1402) of 16S rRNA. The chain is Ribosomal RNA small subunit methyltransferase H from Streptococcus pneumoniae (strain Hungary19A-6).